Consider the following 377-residue polypeptide: Nucleosome assembly protein 1;2 (377 aa).

Residues 26–80 (VNVLKNKLHDLTGKHSNVTESLSPNVRKRVEALREIQTEHDELEAKFFEERAALE) are a coiled coil. The Nuclear export signal motif lies at 47–62 (LSPNVRKRVEALREIQ). The Nuclear localization signal motif lies at 223–228 (KKKPKK). The interval 298-377 (EAAEDDYAEL…GERPPECKQQ (80 aa)) is disordered. Acidic residues predominate over residues 299 to 342 (AAEDDYAELEDDEDEDDDEEDDEDEDEEEEDEEDDEDEEEDEDE). C374 bears the Cysteine methyl ester mark. Residue C374 is the site of S-farnesyl cysteine attachment. Residues 375–377 (KQQ) constitute a propeptide, removed in mature form.

This sequence belongs to the nucleosome assembly protein (NAP) family. As to quaternary structure, binds preferentially histone H1 in vitro. Interacts with CYCB1;1.

Its subcellular location is the nucleus. The protein resides in the cytoplasm. Its function is as follows. May modulate chromatin structure by regulation of nucleosome assembly/disassembly. Could function together with B-type cyclins in the regulation of microtubule dynamics. In Nicotiana tabacum (Common tobacco), this protein is Nucleosome assembly protein 1;2 (NAP1;2).